The following is a 376-amino-acid chain: MKVLLFCIVISLTTLIASGQDIEEELRCPGGYCVSKYLCPNGTFIDDIKHAQTTQLIGLRAGLDIDDFDDCNDYLLVCCQSAPAPTATSTEKPATSDELIEPPPSTNLACGQANEGGLIYDLRNNETLSQYAEYPWVVYILALKKQEANSGDFVCGGTLIHSRLVVTTAHNTDGKTDLVARFGEWDISTTKEPFPQQDIDVAEVIKHPQYVFNPIQNDIALLVLAENVQYAAHIRPICLPQPTDEFVGQRCVSNGWGKERGVYANVMKKLTLPVIGRANCTRMLRYAGLGPFYTLREGFLCAGGEVAVDMCKGDGGSPLACQTESGTYVLAGIVSWGIGCGGFNTPGVYVAVNRYVQWLNEHIVDQALNESFDIKL.

An N-terminal signal peptide occupies residues Met1–Gly19. In terms of domain architecture, Clip spans Glu24–Gln80. Intrachain disulfides connect Cys28–Cys78, Cys33–Cys71, and Cys39–Cys79. Asn41 is a glycosylation site (N-linked (GlcNAc...) asparagine). A disordered region spans residues Pro85–Thr106. The region spanning Asn114–Val364 is the Peptidase S1 domain. 2 N-linked (GlcNAc...) asparagine glycosylation sites follow: Asn125 and Asn279. Disulfide bonds link Cys251-Cys321, Cys280-Cys301, and Cys311-Cys340. Asn369 is a glycosylation site (N-linked (GlcNAc...) asparagine).

The protein belongs to the peptidase S1 family. CLIP subfamily. As to quaternary structure, may form a heterodimer of a light chain and a heavy chain; disulfide-linked. Secreted as a full-length protein. Proteolytically cleaved into two chains which probably remain covalently linked. Cleavage is induced by fungus B.bassiana and Gram-positive or Gram-negative bacteria infection.

Its subcellular location is the secreted. In terms of biological role, inactive serine protease which plays an essential role in the innate immune response against bacteria, fungi and protozoa infection by activating the melanization cascade. In the melanization cascade, acts downstream of TEP1, SPCLIP1 and CLIPA8 to promote CLIPC9 proteolytic cleavage. In the susceptible strain G3, appears to be dispensable for parasite P.berghei ookinete elimination which occurs by lysis. Required for the melanization of Gram-positive and Gram-negative bacteria. Required for the melanization of fungus B.bassiana. This Anopheles gambiae (African malaria mosquito) protein is Inactive CLIP domain-containing serine protease A28.